Here is a 152-residue protein sequence, read N- to C-terminus: Xanthine-guanine phosphoribosyltransferase (152 aa).

Residues 37-38, Arg-69, and 88-96 each bind 5-phospho-alpha-D-ribose 1-diphosphate; these read RG and DDLVDSGDT. Arg-69 contributes to the GMP binding site. Asp-89 contributes to the Mg(2+) binding site. 2 residues coordinate guanine: Asp-92 and Ile-135. Xanthine is bound by residues Asp-92 and Ile-135. Residues 92–96 and 134–135 each bind GMP; these read DSGDT and WI.

This sequence belongs to the purine/pyrimidine phosphoribosyltransferase family. XGPT subfamily. As to quaternary structure, homotetramer. It depends on Mg(2+) as a cofactor.

The protein localises to the cell inner membrane. The catalysed reaction is GMP + diphosphate = guanine + 5-phospho-alpha-D-ribose 1-diphosphate. It carries out the reaction XMP + diphosphate = xanthine + 5-phospho-alpha-D-ribose 1-diphosphate. The enzyme catalyses IMP + diphosphate = hypoxanthine + 5-phospho-alpha-D-ribose 1-diphosphate. It participates in purine metabolism; GMP biosynthesis via salvage pathway; GMP from guanine: step 1/1. It functions in the pathway purine metabolism; XMP biosynthesis via salvage pathway; XMP from xanthine: step 1/1. Functionally, purine salvage pathway enzyme that catalyzes the transfer of the ribosyl-5-phosphate group from 5-phospho-alpha-D-ribose 1-diphosphate (PRPP) to the N9 position of the 6-oxopurines guanine and xanthine to form the corresponding ribonucleotides GMP (guanosine 5'-monophosphate) and XMP (xanthosine 5'-monophosphate), with the release of PPi. To a lesser extent, also acts on hypoxanthine. This Aliivibrio salmonicida (strain LFI1238) (Vibrio salmonicida (strain LFI1238)) protein is Xanthine-guanine phosphoribosyltransferase.